The primary structure comprises 523 residues: 2-isopropylmalate synthase (523 aa).

One can recognise a Pyruvate carboxyltransferase domain in the interval 5 to 267 (VIIFDTTLRD…HTAINHQEIW (263 aa)). Residues Asp-14, His-202, His-204, and Asn-238 each contribute to the Mn(2+) site. Positions 392–523 (RLDYFSVQSG…QHNENNKETV (132 aa)) are regulatory domain.

This sequence belongs to the alpha-IPM synthase/homocitrate synthase family. LeuA type 1 subfamily. Homodimer. It depends on Mn(2+) as a cofactor.

It is found in the cytoplasm. The enzyme catalyses 3-methyl-2-oxobutanoate + acetyl-CoA + H2O = (2S)-2-isopropylmalate + CoA + H(+). It participates in amino-acid biosynthesis; L-leucine biosynthesis; L-leucine from 3-methyl-2-oxobutanoate: step 1/4. Catalyzes the condensation of the acetyl group of acetyl-CoA with 3-methyl-2-oxobutanoate (2-ketoisovalerate) to form 3-carboxy-3-hydroxy-4-methylpentanoate (2-isopropylmalate). The polypeptide is 2-isopropylmalate synthase (Shigella sonnei (strain Ss046)).